Reading from the N-terminus, the 591-residue chain is L-fucose isomerase (591 aa).

Active-site proton acceptor residues include Glu-337 and Asp-361. Mn(2+) contacts are provided by Glu-337, Asp-361, and His-528.

This sequence belongs to the L-fucose isomerase family. In terms of assembly, homohexamer. Mn(2+) is required as a cofactor.

It localises to the cytoplasm. It catalyses the reaction L-fucose = L-fuculose. The enzyme catalyses D-arabinose = D-ribulose. It carries out the reaction L-xylopyranose = L-xylulose. The protein operates within carbohydrate degradation; L-fucose degradation; L-lactaldehyde and glycerone phosphate from L-fucose: step 1/3. With respect to regulation, inhibited by ribitol, L-arabitol and dulcitol. Isomerization of L-xylulose to L-xylose is inhibited by xylitol. Functionally, converts the aldose L-fucose into the corresponding ketose L-fuculose. Also converts D-arabinose into D-ribulose. In addition, catalyzes the isomerization of L-xylulose to L-xylose. The polypeptide is L-fucose isomerase (Escherichia coli (strain K12)).